The sequence spans 158 residues: SsrA-binding protein (158 aa).

This sequence belongs to the SmpB family.

The protein localises to the cytoplasm. Its function is as follows. Required for rescue of stalled ribosomes mediated by trans-translation. Binds to transfer-messenger RNA (tmRNA), required for stable association of tmRNA with ribosomes. tmRNA and SmpB together mimic tRNA shape, replacing the anticodon stem-loop with SmpB. tmRNA is encoded by the ssrA gene; the 2 termini fold to resemble tRNA(Ala) and it encodes a 'tag peptide', a short internal open reading frame. During trans-translation Ala-aminoacylated tmRNA acts like a tRNA, entering the A-site of stalled ribosomes, displacing the stalled mRNA. The ribosome then switches to translate the ORF on the tmRNA; the nascent peptide is terminated with the 'tag peptide' encoded by the tmRNA and targeted for degradation. The ribosome is freed to recommence translation, which seems to be the essential function of trans-translation. In Chloroflexus aggregans (strain MD-66 / DSM 9485), this protein is SsrA-binding protein.